Consider the following 191-residue polypeptide: Protein 2 in picA locus (191 aa).

This sequence belongs to the acyltransferase 3 family.

Its subcellular location is the cell membrane. Its function is as follows. Seems to regulate the surface properties of the bacterium in the presence of plant cells or plant cell extracts. This chain is Protein 2 in picA locus, found in Rhizobium radiobacter (Agrobacterium tumefaciens).